The following is a 197-amino-acid chain: Adenylyl-sulfate kinase (197 aa).

Position 33–40 (33–40 (GLSGSGKS)) interacts with ATP. The active-site Phosphoserine intermediate is Ser107.

It belongs to the APS kinase family.

The catalysed reaction is adenosine 5'-phosphosulfate + ATP = 3'-phosphoadenylyl sulfate + ADP + H(+). Its pathway is sulfur metabolism; hydrogen sulfide biosynthesis; sulfite from sulfate: step 2/3. Catalyzes the synthesis of activated sulfate. The chain is Adenylyl-sulfate kinase from Bacillus licheniformis (strain ATCC 14580 / DSM 13 / JCM 2505 / CCUG 7422 / NBRC 12200 / NCIMB 9375 / NCTC 10341 / NRRL NRS-1264 / Gibson 46).